We begin with the raw amino-acid sequence, 1041 residues long: Importin-9 (1041 aa).

Position 2 is an N-acetylalanine (alanine 2). The region spanning 43–119 is the Importin N-terminal domain; sequence AEEQIKVLEV…RELLPNGLRE (77 aa). The interval 936–967 is disordered; the sequence is QATPAEWNQDDSNDMWEDQEEEEEEEEDGLAG. Residues 943-964 show a composition bias toward acidic residues; that stretch reads NQDDSNDMWEDQEEEEEEEEDG.

It belongs to the importin beta family. In terms of assembly, interacts with histones H2A, H2B, H3 and H4. The binding is coupled to RanGTP cycles. Interacts with AKIRIN2; promoting association with pre-assembled proteasomes. Associates with pre-assembled proteasomes; interaction is indirect and mediated via interaction with AKIRIN2. Interacts with PPP2R1A and PPP2R1B.

The protein localises to the cytoplasm. The protein resides in the nucleus. Nuclear transport receptor that mediates nuclear import of proteins, such as histones, proteasome and actin. Serves as receptor for nuclear localization signals (NLS) in cargo substrates. Is thought to mediate docking of the importin/substrate complex to the nuclear pore complex (NPC) through binding to nucleoporin and the complex is subsequently translocated through the pore by an energy requiring, Ran-dependent mechanism. At the nucleoplasmic side of the NPC, Ran binds to the importin, the importin/substrate complex dissociates and importin is re-exported from the nucleus to the cytoplasm where GTP hydrolysis releases Ran. The directionality of nuclear import is thought to be conferred by an asymmetric distribution of the GTP- and GDP-bound forms of Ran between the cytoplasm and nucleus. Mediates the import of pre-assembled proteasomes into the nucleus; AKIRIN2 acts as a molecular bridge between IPO9 and the proteasome complex. Mediates the nuclear import of histones H2A, H2B, H4 and H4. In addition to nuclear import, also acts as a chaperone for histones by preventing inappropriate non-nucleosomal interactions. Mediates the nuclear import of actin. The sequence is that of Importin-9 from Mus musculus (Mouse).